A 206-amino-acid polypeptide reads, in one-letter code: MGERIRGLYLVTPDAADSATLLASVERVLPARPALLQYRNKLADPLRQLDEARSLRQLCSSAGVPLIINDDVALARAVAADGVHLGRDDGSPAAARAVLGADALIGVSCYDEWVRAEDAAAAGADYVAFGAMFPSSTKPGAVRAPLTLLTRARAALDCPVAAIGGITLDNAPALIEAGADLLAVISDVFAAADPLQRALAYSALFA.

4-amino-2-methyl-5-(diphosphooxymethyl)pyrimidine is bound by residues 37–41 and asparagine 69; that span reads QYRNK. Residues aspartate 70 and aspartate 89 each contribute to the Mg(2+) site. Residue serine 108 participates in 4-amino-2-methyl-5-(diphosphooxymethyl)pyrimidine binding. Position 135 to 137 (135 to 137) interacts with 2-[(2R,5Z)-2-carboxy-4-methylthiazol-5(2H)-ylidene]ethyl phosphate; sequence SST. 4-amino-2-methyl-5-(diphosphooxymethyl)pyrimidine is bound at residue lysine 138. Residues glycine 165 and 185 to 186 contribute to the 2-[(2R,5Z)-2-carboxy-4-methylthiazol-5(2H)-ylidene]ethyl phosphate site; that span reads IS.

This sequence belongs to the thiamine-phosphate synthase family. It depends on Mg(2+) as a cofactor.

The enzyme catalyses 2-[(2R,5Z)-2-carboxy-4-methylthiazol-5(2H)-ylidene]ethyl phosphate + 4-amino-2-methyl-5-(diphosphooxymethyl)pyrimidine + 2 H(+) = thiamine phosphate + CO2 + diphosphate. It carries out the reaction 2-(2-carboxy-4-methylthiazol-5-yl)ethyl phosphate + 4-amino-2-methyl-5-(diphosphooxymethyl)pyrimidine + 2 H(+) = thiamine phosphate + CO2 + diphosphate. It catalyses the reaction 4-methyl-5-(2-phosphooxyethyl)-thiazole + 4-amino-2-methyl-5-(diphosphooxymethyl)pyrimidine + H(+) = thiamine phosphate + diphosphate. The protein operates within cofactor biosynthesis; thiamine diphosphate biosynthesis; thiamine phosphate from 4-amino-2-methyl-5-diphosphomethylpyrimidine and 4-methyl-5-(2-phosphoethyl)-thiazole: step 1/1. Condenses 4-methyl-5-(beta-hydroxyethyl)thiazole monophosphate (THZ-P) and 2-methyl-4-amino-5-hydroxymethyl pyrimidine pyrophosphate (HMP-PP) to form thiamine monophosphate (TMP). This Azoarcus sp. (strain BH72) protein is Thiamine-phosphate synthase.